Consider the following 159-residue polypeptide: Photosystem II extrinsic protein U, chloroplastic (159 aa).

It belongs to the PsbU family. As to quaternary structure, PSII is composed of 1 copy each of membrane proteins PsbA, PsbB, PsbC, PsbD, PsbE, PsbF, PsbH, PsbI, PsbJ, PsbK, PsbL, PsbM, PsbT, PsbX, PsbY, PsbZ, Psb30/Ycf12, at least 3 peripheral proteins of the oxygen-evolving complex and a large number of cofactors. It forms dimeric complexes. Part of the oxygen-evolving complex of photosystem II.

Its subcellular location is the plastid. It is found in the chloroplast thylakoid membrane. In terms of biological role, one of the extrinsic, lumenal subunits of photosystem II (PSII). PSII is a light-driven water plastoquinone oxidoreductase, using light energy to abstract electrons from H(2)O, generating a proton gradient subsequently used for ATP formation. The extrinsic proteins stabilize the structure of photosystem II oxygen-evolving complex (OEC), the ion environment of oxygen evolution and protect the OEC against heat-induced inactivation. This chain is Photosystem II extrinsic protein U, chloroplastic, found in Karenia brevis (Red tide dinoflagellate).